The following is a 357-amino-acid chain: Tetraacyldisaccharide 4'-kinase (357 aa).

67–74 (SVGGTGKT) contacts ATP.

It belongs to the LpxK family.

The enzyme catalyses a lipid A disaccharide + ATP = a lipid IVA + ADP + H(+). The protein operates within glycolipid biosynthesis; lipid IV(A) biosynthesis; lipid IV(A) from (3R)-3-hydroxytetradecanoyl-[acyl-carrier-protein] and UDP-N-acetyl-alpha-D-glucosamine: step 6/6. Transfers the gamma-phosphate of ATP to the 4'-position of a tetraacyldisaccharide 1-phosphate intermediate (termed DS-1-P) to form tetraacyldisaccharide 1,4'-bis-phosphate (lipid IVA). The chain is Tetraacyldisaccharide 4'-kinase from Syntrophotalea carbinolica (strain DSM 2380 / NBRC 103641 / GraBd1) (Pelobacter carbinolicus).